The sequence spans 113 residues: Small ribosomal subunit protein uS17 (113 aa).

This sequence belongs to the universal ribosomal protein uS17 family. As to quaternary structure, part of the 30S ribosomal subunit.

One of the primary rRNA binding proteins, it binds specifically to the 5'-end of 16S ribosomal RNA. This chain is Small ribosomal subunit protein uS17, found in Pyrococcus abyssi (strain GE5 / Orsay).